The primary structure comprises 298 residues: UDP-N-acetylenolpyruvoylglucosamine reductase (298 aa).

An FAD-binding PCMH-type domain is found at 27 to 191 (TGGNADVFVM…LDATFSLELE (165 aa)). Arg170 is an active-site residue. Residue Ser220 is the Proton donor of the active site. Glu290 is a catalytic residue.

Belongs to the MurB family. FAD is required as a cofactor.

The protein localises to the cytoplasm. It carries out the reaction UDP-N-acetyl-alpha-D-muramate + NADP(+) = UDP-N-acetyl-3-O-(1-carboxyvinyl)-alpha-D-glucosamine + NADPH + H(+). The protein operates within cell wall biogenesis; peptidoglycan biosynthesis. Its function is as follows. Cell wall formation. This chain is UDP-N-acetylenolpyruvoylglucosamine reductase, found in Listeria innocua serovar 6a (strain ATCC BAA-680 / CLIP 11262).